A 101-amino-acid polypeptide reads, in one-letter code: Small ribosomal subunit protein uS14A (101 aa).

The tract at residues I31 to R69 is disordered. The span at P38–R53 shows a compositional bias: basic and acidic residues.

Belongs to the universal ribosomal protein uS14 family. As to quaternary structure, part of the 30S ribosomal subunit. Contacts proteins S3 and S10.

In terms of biological role, binds 16S rRNA, required for the assembly of 30S particles and may also be responsible for determining the conformation of the 16S rRNA at the A site. This is Small ribosomal subunit protein uS14A from Saccharopolyspora erythraea (strain ATCC 11635 / DSM 40517 / JCM 4748 / NBRC 13426 / NCIMB 8594 / NRRL 2338).